The sequence spans 337 residues: 4-hydroxyproline 2-epimerase (337 aa).

Cys-91 (proton acceptor) is an active-site residue. Substrate contacts are provided by residues 92-93, Asp-252, and 257-258; these read GH and GT.

It belongs to the proline racemase family.

The enzyme catalyses trans-4-hydroxy-L-proline = cis-4-hydroxy-D-proline. Functionally, catalyzes the epimerization of trans-4-hydroxy-L-proline (t4LHyp) to cis-4-hydroxy-D-proline (c4DHyp). Is involved in a degradation pathway that converts t4LHyp to alpha-ketoglutarate, which allows R.sphaeroides to grow on t4LHyp as a sole carbon source. Displays no proline racemase activity. The polypeptide is 4-hydroxyproline 2-epimerase (Cereibacter sphaeroides (strain ATCC 17023 / DSM 158 / JCM 6121 / CCUG 31486 / LMG 2827 / NBRC 12203 / NCIMB 8253 / ATH 2.4.1.) (Rhodobacter sphaeroides)).